Reading from the N-terminus, the 141-residue chain is Large ribosomal subunit protein uL22 (141 aa).

The disordered stretch occupies residues 110 to 141 (EEKKTVAKKTTTTKAPAKKTTSTKKATVKKES). Positions 117 to 134 (KKTTTTKAPAKKTTSTKK) are enriched in low complexity.

This sequence belongs to the universal ribosomal protein uL22 family. In terms of assembly, part of the 50S ribosomal subunit.

This protein binds specifically to 23S rRNA; its binding is stimulated by other ribosomal proteins, e.g. L4, L17, and L20. It is important during the early stages of 50S assembly. It makes multiple contacts with different domains of the 23S rRNA in the assembled 50S subunit and ribosome. Functionally, the globular domain of the protein is located near the polypeptide exit tunnel on the outside of the subunit, while an extended beta-hairpin is found that lines the wall of the exit tunnel in the center of the 70S ribosome. The protein is Large ribosomal subunit protein uL22 of Campylobacter jejuni (strain RM1221).